The sequence spans 356 residues: Tyrosine recombinase XerS (356 aa).

The Core-binding (CB) domain occupies Ile-16–Thr-121. The 186-residue stretch at Ala-169–Asp-354 folds into the Tyr recombinase domain. Residues Arg-210, Lys-234, His-306, Arg-309, and His-332 contribute to the active site. Tyr-341 acts as the O-(3'-phospho-DNA)-tyrosine intermediate in catalysis.

Belongs to the 'phage' integrase family. XerS subfamily.

It localises to the cytoplasm. With respect to regulation, ftsK is required for recombination. Its function is as follows. Site-specific tyrosine recombinase, which acts by catalyzing the cutting and rejoining of the recombining DNA molecules. Essential to convert dimers of the bacterial chromosome into monomers to permit their segregation at cell division. The sequence is that of Tyrosine recombinase XerS from Streptococcus pyogenes serotype M1.